The chain runs to 275 residues: Glutamate 5-kinase (275 aa).

Lys17 is an ATP binding site. Substrate contacts are provided by Ser57, Asp144, and Asn160. ATP is bound by residues Ser180–Asp181 and Thr222–Lys228.

The protein belongs to the glutamate 5-kinase family.

Its subcellular location is the cytoplasm. It carries out the reaction L-glutamate + ATP = L-glutamyl 5-phosphate + ADP. Its pathway is amino-acid biosynthesis; L-proline biosynthesis; L-glutamate 5-semialdehyde from L-glutamate: step 1/2. In terms of biological role, catalyzes the transfer of a phosphate group to glutamate to form L-glutamate 5-phosphate. The polypeptide is Glutamate 5-kinase (Streptococcus pyogenes serotype M12 (strain MGAS2096)).